Reading from the N-terminus, the 279-residue chain is MTTRIDTKFAELKAEGRPALVTYFMGGDPDLETALKVMKALPKAGADVIELGMPFSDPMADGPAIQAAGLRALNAGQTLAKTLYMAAEFRKEDDTTPIVMMGYYNPIYVYGVERFLTDAKASGVDGLIVVDLPSEMDAELCIPAMKAGINFIRLTTPTTDDKRLPKVLHNSSGFVYYVSMNGITGAAIADTAKVGEAVRHIKKSTDLPICVGFGVKTPEQAAAIATHADGVVVGTAIVNAIAGELDEKGKVKGDPVAAATQLVHALAESVRATRLEAAQ.

Catalysis depends on proton acceptor residues Glu50 and Asp61.

Belongs to the TrpA family. In terms of assembly, tetramer of two alpha and two beta chains.

It carries out the reaction (1S,2R)-1-C-(indol-3-yl)glycerol 3-phosphate + L-serine = D-glyceraldehyde 3-phosphate + L-tryptophan + H2O. Its pathway is amino-acid biosynthesis; L-tryptophan biosynthesis; L-tryptophan from chorismate: step 5/5. Its function is as follows. The alpha subunit is responsible for the aldol cleavage of indoleglycerol phosphate to indole and glyceraldehyde 3-phosphate. This is Tryptophan synthase alpha chain from Brucella suis (strain ATCC 23445 / NCTC 10510).